Here is a 322-residue protein sequence, read N- to C-terminus: Arginase-1 (322 aa).

A disordered region spans residues 1–27 (MSSKPQSIGVIGAPFSKGQPRGGVEEG). A Phosphoserine modification is found at Ser7. At Lys17 the chain carries N6-succinyllysine. A Phosphoserine modification is found at Ser62. Position 75 is an N6-succinyllysine (Lys75). His101, Asp124, His126, and Asp128 together coordinate Mn(2+). Substrate is bound by residues 126 to 130 (HTDIN), 137 to 139 (TGN), and Asp183. Phosphoserine is present on Ser217. Residues Asp232 and Asp234 each contribute to the Mn(2+) site. Residues Thr246 and Glu277 each coordinate substrate.

This sequence belongs to the arginase family. As to quaternary structure, homotrimer. Interacts with CMTM6. Mn(2+) is required as a cofactor.

The protein localises to the cytoplasm. It catalyses the reaction L-arginine + H2O = urea + L-ornithine. The protein operates within nitrogen metabolism; urea cycle; L-ornithine and urea from L-arginine: step 1/1. In Bos taurus (Bovine), this protein is Arginase-1 (ARG1).